Reading from the N-terminus, the 355-residue chain is MAPVTETGIGLLCLCRQGFEPELAGELQFRASEAGFAGYARTQRNDGYVLFMCDEAAALAPRLRWRELIFARQKLVVLAELPQLDPADRITPMLEVLADAPRFGDLWVEHPDSDAGKPLSGLARAFGNALRPALRKAGKLTDKPNNRLPRLHVVFVDGTHAFVCVADPADSAPWALGIPRLKLLPEAPSRSALKLDEALLTLLTPEEREALAKPGMRAADLGAAPGGWTWVLTRQHMHVLSIDNGPLRQHVLDTGLVEHLRADGFHWHPEQPLDWMVCDMVEQPRRVAERMATWFREGWCRHAIFNLKLPMKKRWDETRLCLDLFQEQAGKPLVVRAKQLYHDREEITVLASPLR.

S-adenosyl-L-methionine contacts are provided by residues serine 191, alanine 224–glycine 227, aspartate 243, aspartate 263, and aspartate 279. Lysine 308 (proton acceptor) is an active-site residue.

Belongs to the class I-like SAM-binding methyltransferase superfamily. RNA methyltransferase RlmE family. RlmM subfamily. As to quaternary structure, monomer.

The protein resides in the cytoplasm. It carries out the reaction cytidine(2498) in 23S rRNA + S-adenosyl-L-methionine = 2'-O-methylcytidine(2498) in 23S rRNA + S-adenosyl-L-homocysteine + H(+). Its function is as follows. Catalyzes the 2'-O-methylation at nucleotide C2498 in 23S rRNA. The polypeptide is Ribosomal RNA large subunit methyltransferase M (Stenotrophomonas maltophilia (strain R551-3)).